Here is a 149-residue protein sequence, read N- to C-terminus: Myoglobin (149 aa).

Ala-2 bears the N-acetylalanine mark. The Globin domain maps to 2 to 143; sequence ABWDKVNSVW…ICSDIEKEYK (142 aa). His-89 serves as a coordination point for heme b.

This sequence belongs to the globin family. In terms of assembly, monomeric.

It is found in the cytoplasm. The protein resides in the sarcoplasm. It catalyses the reaction Fe(III)-heme b-[protein] + nitric oxide + H2O = Fe(II)-heme b-[protein] + nitrite + 2 H(+). The catalysed reaction is H2O2 + AH2 = A + 2 H2O. Its function is as follows. Monomeric heme protein which primary function is to store oxygen and facilitate its diffusion within muscle tissues. Reversibly binds oxygen through a pentacoordinated heme iron and enables its timely and efficient release as needed during periods of heightened demand. Depending on the oxidative conditions of tissues and cells, and in addition to its ability to bind oxygen, it also has a nitrite reductase activity whereby it regulates the production of bioactive nitric oxide. Under stress conditions, like hypoxia and anoxia, it also protects cells against reactive oxygen species thanks to its pseudoperoxidase activity. The sequence is that of Myoglobin (mb) from Hemitriakis japanica (Japanese topeshark).